The sequence spans 791 residues: Cytochrome c oxidase polypeptide I+III (791 aa).

The segment at 1-473 (MAITAKPKAG…LLSTIGAYIL (473 aa)) is COX1. A helical membrane pass occupies residues 29-49 (LMYTATAFFAFALAGVFSLLI). His73 contributes to the Fe(II)-heme a binding site. A run of 17 helical transmembrane segments spans residues 78 to 98 (LFFFIIQAGLTGFGNFVVPLM), 111 to 131 (AFSYWAFLGAIVLALMSYFFP), 155 to 175 (FYLAAILLLGFSSLLGNANFV), 201 to 221 (ASVLNLFSLAGLTAATLLVLL), 244 to 264 (FFWFYSHPTVYVMLLPYLGIL), 282 to 302 (MVWAQMGIVVLGTMVWAHHMF), 312 to 332 (IAFAFFTALIAVPTGVKLFNI), 347 to 367 (LYWVLGFIFNFLLGGITGVML), 381 to 401 (FVVAHFHNVLMAGSGFGAFAG), 423 to 443 (FWLFLVGYLLTFLPQYALGYL), 464 to 484 (LLSTIGAYILGLGGLVWIYTM), 566 to 586 (FAFFVAVAALPVPNVWMWVFL), 617 to 637 (AWMGMAWFIVSEVGLFAILIA), 657 to 677 (LWLALLNTFLLVSSSFTVHFA), 691 to 711 (FGLLVTIILGVLFFLVQSWEF), 729 to 749 (FFTIVGLHGLHVVIGGFGLIL), and 771 to 791 (SMYWHLVDAVWLVIVTIFYVW). Residues His250, Tyr254, His299, and His300 each coordinate Cu cation. The segment at residues 250–254 (HPTVY) is a cross-link (1'-histidyl-3'-tyrosine (His-Tyr)). Residue His385 participates in heme a3 binding. Residue His387 coordinates Fe(II)-heme a. Positions 545–791 (DPAHIHLPNS…LVIVTIFYVW (247 aa)) are COX3.

It in the N-terminal section; belongs to the heme-copper respiratory oxidase family. In the C-terminal section; belongs to the cytochrome c oxidase subunit 3 family. As to quaternary structure, possibly a heterodimer of A-protein (contains: cytochrome c oxidase subunits I and III) and subunit II. The A-protein could also present a precursor form of subunits I and III. Cu(2+) is required as a cofactor. Requires heme as cofactor.

Its subcellular location is the cell membrane. The catalysed reaction is 4 Fe(II)-[cytochrome c] + O2 + 8 H(+)(in) = 4 Fe(III)-[cytochrome c] + 2 H2O + 4 H(+)(out). It functions in the pathway energy metabolism; oxidative phosphorylation. Functionally, cytochrome c oxidase is the component of the respiratory chain that catalyzes the reduction of oxygen to water. Subunits 1-3 form the functional core of the enzyme complex. Co I is the catalytic subunit of the enzyme. Electrons originating in cytochrome c are transferred via the copper A center of subunit 2 and heme a of subunit 1 to the bimetallic center formed by heme a3 and copper B. This cytochrome c oxidase shows proton pump activity across the membrane in addition to the electron transfer. This chain is Cytochrome c oxidase polypeptide I+III (caaA), found in Thermus thermophilus (strain ATCC 27634 / DSM 579 / HB8).